A 500-amino-acid chain; its full sequence is L-arabinose isomerase (500 aa).

Positions 306, 333, 350, and 450 each coordinate Mn(2+).

The protein belongs to the arabinose isomerase family. In terms of assembly, homohexamer. Mn(2+) is required as a cofactor.

It catalyses the reaction beta-L-arabinopyranose = L-ribulose. It participates in carbohydrate degradation; L-arabinose degradation via L-ribulose; D-xylulose 5-phosphate from L-arabinose (bacterial route): step 1/3. Functionally, catalyzes the conversion of L-arabinose to L-ribulose. This Escherichia coli O6:H1 (strain CFT073 / ATCC 700928 / UPEC) protein is L-arabinose isomerase.